Here is a 27-residue protein sequence, read N- to C-terminus: uncharacterized protein (27 aa).

This is an uncharacterized protein from Archaeoglobus fulgidus (strain ATCC 49558 / DSM 4304 / JCM 9628 / NBRC 100126 / VC-16).